An 848-amino-acid chain; its full sequence is Trimethylamine-N-oxide reductase 1 (848 aa).

Positions 1–39 form a signal peptide, tat-type signal; that stretch reads MNNNDLFQASRRRFLAQLGGLTVAGMLGPSLLTPRRATA. Residue Ser191 coordinates Mo-bis(molybdopterin guanine dinucleotide).

Belongs to the prokaryotic molybdopterin-containing oxidoreductase family. Interacts with the N-terminal domain of TorC. It depends on Mo-bis(molybdopterin guanine dinucleotide) as a cofactor. Post-translationally, exported by the Tat system. The position of the signal peptide cleavage has been experimentally proven.

It localises to the periplasm. It catalyses the reaction trimethylamine + 2 Fe(III)-[cytochrome c] + H2O = trimethylamine N-oxide + 2 Fe(II)-[cytochrome c] + 3 H(+). Functionally, reduces trimethylamine-N-oxide (TMAO) into trimethylamine; an anaerobic reaction coupled to energy-yielding reactions. The chain is Trimethylamine-N-oxide reductase 1 (torA) from Escherichia coli (strain K12).